The following is a 163-amino-acid chain: 6,7-dimethyl-8-ribityllumazine synthase 1 (163 aa).

Residues Phe-27, 58–60, and 87–89 contribute to the 5-amino-6-(D-ribitylamino)uracil site; these read ALE and CVV. 92–93 is a binding site for (2S)-2-hydroxy-3-oxobutyl phosphate; it reads ET. Catalysis depends on His-95, which acts as the Proton donor. Position 120 (Asn-120) interacts with 5-amino-6-(D-ribitylamino)uracil. Arg-134 provides a ligand contact to (2S)-2-hydroxy-3-oxobutyl phosphate.

Belongs to the DMRL synthase family.

The enzyme catalyses (2S)-2-hydroxy-3-oxobutyl phosphate + 5-amino-6-(D-ribitylamino)uracil = 6,7-dimethyl-8-(1-D-ribityl)lumazine + phosphate + 2 H2O + H(+). It functions in the pathway cofactor biosynthesis; riboflavin biosynthesis; riboflavin from 2-hydroxy-3-oxobutyl phosphate and 5-amino-6-(D-ribitylamino)uracil: step 1/2. Its function is as follows. Catalyzes the formation of 6,7-dimethyl-8-ribityllumazine by condensation of 5-amino-6-(D-ribitylamino)uracil with 3,4-dihydroxy-2-butanone 4-phosphate. This is the penultimate step in the biosynthesis of riboflavin. This chain is 6,7-dimethyl-8-ribityllumazine synthase 1, found in Rhodopseudomonas palustris (strain ATCC BAA-98 / CGA009).